Consider the following 180-residue polypeptide: Large ribosomal subunit protein uL5 (180 aa).

Belongs to the universal ribosomal protein uL5 family. In terms of assembly, part of the 50S ribosomal subunit; part of the 5S rRNA/L5/L18/L25 subcomplex. Contacts the 5S rRNA and the P site tRNA. Forms a bridge to the 30S subunit in the 70S ribosome.

Functionally, this is one of the proteins that bind and probably mediate the attachment of the 5S RNA into the large ribosomal subunit, where it forms part of the central protuberance. In the 70S ribosome it contacts protein S13 of the 30S subunit (bridge B1b), connecting the 2 subunits; this bridge is implicated in subunit movement. Contacts the P site tRNA; the 5S rRNA and some of its associated proteins might help stabilize positioning of ribosome-bound tRNAs. The sequence is that of Large ribosomal subunit protein uL5 from Streptococcus pyogenes serotype M49 (strain NZ131).